The following is a 392-amino-acid chain: Integrin-linked kinase-associated serine/threonine phosphatase 2C (392 aa).

Methionine 1 is modified (N-acetylmethionine). The disordered stretch occupies residues 1–90 (MDLFGDLPEP…TSEEEKNGSE (90 aa)). Position 13 is a phosphoserine (serine 13). The span at 56 to 70 (SGDSGSLATSISQMV) shows a compositional bias: polar residues. Positions 72–90 (TEGKGAKRKTSEEEKNGSE) are enriched in basic and acidic residues. The region spanning 108–390 (KGYVAERKGE…DNVTVMVVRI (283 aa)) is the PPM-type phosphatase domain. 2 residues coordinate Mn(2+): aspartate 152 and glycine 153. Residue lysine 210 is modified to N6-acetyllysine. Mn(2+) is bound by residues aspartate 326 and aspartate 381.

It belongs to the PP2C family. In terms of assembly, interacts with ILK. Specific association with ILK is independent of the catalytic activity of either partner. Requires Mg(2+) as cofactor. Mn(2+) is required as a cofactor. In terms of tissue distribution, widely expressed. Highest levels expressed in striated muscle. Much lower levels evident in various smooth muscle tissues.

Its subcellular location is the cytoplasm. The catalysed reaction is O-phospho-L-seryl-[protein] + H2O = L-seryl-[protein] + phosphate. It carries out the reaction O-phospho-L-threonyl-[protein] + H2O = L-threonyl-[protein] + phosphate. Inhibited rather than stimulated by magnesium. In terms of biological role, protein phosphatase that may play a role in regulation of cell cycle progression via dephosphorylation of its substrates whose appropriate phosphorylation states might be crucial for cell proliferation. Selectively associates with integrin linked kinase (ILK), to modulate cell adhesion and growth factor signaling. Inhibits the ILK-GSK3B signaling axis and may play an important role in inhibiting oncogenic transformation. In Homo sapiens (Human), this protein is Integrin-linked kinase-associated serine/threonine phosphatase 2C (ILKAP).